A 372-amino-acid polypeptide reads, in one-letter code: Peptide chain release factor 1 (372 aa).

Gln237 carries the N5-methylglutamine modification.

The protein belongs to the prokaryotic/mitochondrial release factor family. In terms of processing, methylated by PrmC. Methylation increases the termination efficiency of RF1.

It localises to the cytoplasm. In terms of biological role, peptide chain release factor 1 directs the termination of translation in response to the peptide chain termination codons UAG and UAA. This chain is Peptide chain release factor 1, found in Anaeromyxobacter sp. (strain Fw109-5).